A 148-amino-acid polypeptide reads, in one-letter code: MKMELKVKPIENGTVIDHISGSKALKVYKILNIEEKLPMTIALNVPSKKGVMKDILKIEGLELTKEDVNKIALISPDATINIIKEGIVIKKFKVDLPKRIDGIIKCTNPNCITNKENIDGKFSIEQKNTLKIRCEYCEKFINSIIISK.

Positions 106, 111, 134, and 137 each coordinate Zn(2+).

This sequence belongs to the PyrI family. Contains catalytic and regulatory chains. Zn(2+) serves as cofactor.

Involved in allosteric regulation of aspartate carbamoyltransferase. The sequence is that of Aspartate carbamoyltransferase regulatory chain from Methanococcus maripaludis (strain C7 / ATCC BAA-1331).